Consider the following 162-residue polypeptide: MNPRRKKRLTLAVALIGGVAAIASLLLYALNSNLNLFYTPSEIVNGKTDTGVKPDVGQRIRVGGMVTVGSMVRDPDSLHVQFAVHDSLGGEILVTYDDLLPDLFREGQGIVAQGVLTAEGKLEATEVLAKHDENYMPPEVAEAMGQKHEKLDYSQQKAPDTK.

The Cytoplasmic segment spans residues 1-8 (MNPRRKKR). The helical; Signal-anchor for type II membrane protein transmembrane segment at 9-29 (LTLAVALIGGVAAIASLLLYA) threads the bilayer. Topologically, residues 30–162 (LNSNLNLFYT…YSQQKAPDTK (133 aa)) are periplasmic. Heme-binding residues include H131 and Y135. The segment at 139 to 162 (EVAEAMGQKHEKLDYSQQKAPDTK) is disordered. A compositionally biased stretch (polar residues) spans 153–162 (YSQQKAPDTK).

The protein belongs to the CcmE/CycJ family.

It localises to the cell inner membrane. In terms of biological role, heme chaperone required for the biogenesis of c-type cytochromes. Transiently binds heme delivered by CcmC and transfers the heme to apo-cytochromes in a process facilitated by CcmF and CcmH. The chain is Cytochrome c-type biogenesis protein CcmE from Shewanella putrefaciens (strain CN-32 / ATCC BAA-453).